Here is a 386-residue protein sequence, read N- to C-terminus: N-terminal EF-hand calcium-binding protein 2 (386 aa).

Omega-N-methylarginine is present on R10. R42 bears the Asymmetric dimethylarginine mark. EF-hand domains follow at residues 60–95 and 96–129; these read GGTA…GVLN and EKEL…HMGD. 10 residues coordinate Ca(2+): D73, N75, D77, K79, E84, D107, D109, T111, H113, and E118. A coiled-coil region spans residues 170–201; the sequence is LKETANQIQSLLSSVESAVEAIEEQTSQLRQN. Positions 286-375 constitute an ABM domain; sequence QLVRQEMAVC…SQPEALSRIL (90 aa).

In terms of assembly, interacts (calcium-dependent) with ADORA2A and GRM5. As to expression, expressed in brain. Expressed in the spinal dorsal horn with especially strong expression in lamina IIi; found in excitory synaptic boutons and in ependymal cells (at protein level).

The protein localises to the cytoplasm. The protein resides in the cell projection. Its subcellular location is the dendrite. It localises to the axon. It is found in the cell membrane. May act as a signaling scaffold protein that senses intracellular calcium. Can modulate ligand-induced internalization of ADORA2A and coupling efficiency of mGluR5/GRM5; for both receptors may regulate signaling activity such as promoting MAPK1/3 (ERK1/2) activation. This is N-terminal EF-hand calcium-binding protein 2 (NECAB2) from Homo sapiens (Human).